The chain runs to 141 residues: Lutropin subunit beta (141 aa).

A signal peptide spans 1–20 (MEMLQGLLLWLLLSVAGVWA). Position 21 is a blocked amino end (Ser) (Ser-21). 6 disulfide bridges follow: Cys-29-Cys-77, Cys-43-Cys-92, Cys-46-Cys-130, Cys-54-Cys-108, Cys-58-Cys-110, and Cys-113-Cys-120. Asn-33 is a glycosylation site (N-linked (GlcNAc...) asparagine).

This sequence belongs to the glycoprotein hormones subunit beta family. Heterodimer of a common alpha chain and a unique beta chain which confers biological specificity to thyrotropin, lutropin, follitropin and gonadotropin.

It is found in the secreted. Promotes spermatogenesis and ovulation by stimulating the testes and ovaries to synthesize steroids. This Sus scrofa (Pig) protein is Lutropin subunit beta (LHB).